Here is a 279-residue protein sequence, read N- to C-terminus: Single-strand selective monofunctional uracil DNA glycosylase (279 aa).

Substrate contacts are provided by Met-86, Phe-100, and Asn-165. Residues 175–189 (SGRNLTPAELPAKQR) form a DNA-binding region. A substrate-binding site is contributed by His-241.

It belongs to the uracil-DNA glycosylase (UDG) superfamily. SMUG1 family.

Its subcellular location is the nucleus. Its function is as follows. Recognizes base lesions in the genome and initiates base excision DNA repair. Acts as a monofunctional DNA glycosylase specific for uracil (U) residues in DNA with a preference for single-stranded DNA substrates. The activity is greater toward mismatches (U/G) compared to matches (U/A). Excises uracil (U), 5-formyluracil (fU) and uracil derivatives bearing an oxidized group at C5 [5-hydroxyuracil (hoU) and 5-hydroxymethyluracil (hmU)] in ssDNA and dsDNA, but not analogous cytosine derivatives (5-hydroxycytosine and 5-formylcytosine), nor other oxidized bases. The activity is damage-specific and salt-dependent. The substrate preference is the following: ssDNA &gt; dsDNA (G pair) = dsDNA (A pair) at low salt concentration, and dsDNA (G pair) &gt; dsDNA (A pair) &gt; ssDNA at high salt concentration. This chain is Single-strand selective monofunctional uracil DNA glycosylase (Smug1), found in Mus musculus (Mouse).